The primary structure comprises 1375 residues: DNA-directed RNA polymerase subunit beta' (1375 aa).

The tract at residues 1–158 (MAKNEVLSLP…RVNKIIQPIR (158 aa)) is unknown. Positions 159–1353 (KTYGSKAFTH…GGLIPAGTGI (1195 aa)) are DNA-directed RNA polymerase subunit beta'. Zn(2+) is bound by residues Cys-219, Cys-221, Cys-233, and Cys-236. Residues Asp-607, Asp-609, and Asp-611 each coordinate Mg(2+).

This sequence belongs to the RNA polymerase beta' chain family. The RNAP catalytic core consists of 2 alpha, 1 beta, 1 beta' and 1 omega subunit. When a sigma factor is associated with the core the holoenzyme is formed, which can initiate transcription. The cofactor is Mg(2+). Requires Zn(2+) as cofactor.

The enzyme catalyses RNA(n) + a ribonucleoside 5'-triphosphate = RNA(n+1) + diphosphate. Functionally, DNA-dependent RNA polymerase catalyzes the transcription of DNA into RNA using the four ribonucleoside triphosphates as substrates. The protein is DNA-directed RNA polymerase subunit beta' of Acholeplasma laidlawii (strain PG-8A).